We begin with the raw amino-acid sequence, 248 residues long: Adenosylcobinamide-GDP ribazoletransferase (248 aa).

The next 6 helical transmembrane spans lie at Leu28–Leu48, Val103–Val123, Leu126–Val146, Ala169–Met189, Met193–Leu213, and Val225–Ala245.

It belongs to the CobS family. The cofactor is Mg(2+).

It is found in the cell inner membrane. It catalyses the reaction alpha-ribazole + adenosylcob(III)inamide-GDP = adenosylcob(III)alamin + GMP + H(+). The enzyme catalyses alpha-ribazole 5'-phosphate + adenosylcob(III)inamide-GDP = adenosylcob(III)alamin 5'-phosphate + GMP + H(+). Its pathway is cofactor biosynthesis; adenosylcobalamin biosynthesis; adenosylcobalamin from cob(II)yrinate a,c-diamide: step 7/7. Functionally, joins adenosylcobinamide-GDP and alpha-ribazole to generate adenosylcobalamin (Ado-cobalamin). Also synthesizes adenosylcobalamin 5'-phosphate from adenosylcobinamide-GDP and alpha-ribazole 5'-phosphate. This is Adenosylcobinamide-GDP ribazoletransferase from Chlorobium phaeobacteroides (strain BS1).